A 251-amino-acid chain; its full sequence is DNA repair protein RecO (251 aa).

It belongs to the RecO family.

Involved in DNA repair and RecF pathway recombination. The polypeptide is DNA repair protein RecO (Lactococcus lactis subsp. cremoris (strain SK11)).